Here is a 154-residue protein sequence, read N- to C-terminus: Spermatogenesis-associated protein 19, mitochondrial (154 aa).

The transit peptide at 1 to 24 (MIITTWIMYIFARKTVGLPFPPRV) directs the protein to the mitochondrion. Serine 26 and serine 116 each carry phosphoserine.

In terms of tissue distribution, expressed specifically in adult testis (at protein level).

It localises to the mitochondrion outer membrane. The protein localises to the mitochondrion. It is found in the cell projection. Its subcellular location is the cilium. The protein resides in the flagellum. In terms of biological role, essential for sperm motility and male fertility. Plays an important role in sperm motility by regulating the organization and function of the mitochondria and is also required for correct sperm midpiece assembly. This is Spermatogenesis-associated protein 19, mitochondrial (Spata19) from Mus musculus (Mouse).